Reading from the N-terminus, the 219-residue chain is Probable GTP-binding protein EngB (219 aa).

In terms of domain architecture, EngB-type G spans 24 to 207 (VQPEIAFAGR…HALIESWVRP (184 aa)). GTP is bound by residues 32–39 (GRSNAGKS), 59–63 (GRTQH), 81–84 (DLPG), 148–151 (TKCD), and 186–188 (FSA). S39 and T61 together coordinate Mg(2+).

Belongs to the TRAFAC class TrmE-Era-EngA-EngB-Septin-like GTPase superfamily. EngB GTPase family. Requires Mg(2+) as cofactor.

Its function is as follows. Necessary for normal cell division and for the maintenance of normal septation. This Burkholderia multivorans (strain ATCC 17616 / 249) protein is Probable GTP-binding protein EngB.